Reading from the N-terminus, the 206-residue chain is Large ribosomal subunit protein uL4 (206 aa).

A disordered region spans residues 47-77; it reads TRAQKGRSDVTGSTRKQWRQKGTGRARTGAA.

This sequence belongs to the universal ribosomal protein uL4 family. As to quaternary structure, part of the 50S ribosomal subunit.

Its function is as follows. One of the primary rRNA binding proteins, this protein initially binds near the 5'-end of the 23S rRNA. It is important during the early stages of 50S assembly. It makes multiple contacts with different domains of the 23S rRNA in the assembled 50S subunit and ribosome. In terms of biological role, forms part of the polypeptide exit tunnel. The chain is Large ribosomal subunit protein uL4 from Nitrosomonas europaea (strain ATCC 19718 / CIP 103999 / KCTC 2705 / NBRC 14298).